A 420-amino-acid polypeptide reads, in one-letter code: E3 ubiquitin-protein ligase pellino homolog 2 (420 aa).

Positions 15-202 (EPVKYGELVV…MHPRGGFTEE (188 aa)) constitute an FHA; atypical domain.

This sequence belongs to the pellino family. In terms of assembly, interacts with TRAF6, IRAK1, IRAK4 and MAP3K7. Interacts with BCL10; this interaction is impaired by SOCS3. Post-translationally, phosphorylated by IRAK1 and IRAK4 enhancing its E3 ligase activity.

The catalysed reaction is S-ubiquitinyl-[E2 ubiquitin-conjugating enzyme]-L-cysteine + [acceptor protein]-L-lysine = [E2 ubiquitin-conjugating enzyme]-L-cysteine + N(6)-ubiquitinyl-[acceptor protein]-L-lysine.. The protein operates within protein modification; protein ubiquitination. E3 ubiquitin ligase catalyzing the covalent attachment of ubiquitin moieties onto substrate proteins. Involved in the TLR and IL-1 signaling pathways via interaction with the complex containing IRAK kinases and TRAF6. Mediates IL1B-induced IRAK1 'Lys-63'-linked polyubiquitination and possibly 'Lys-48'-linked ubiquitination. May be important for LPS- and IL1B-induced MAP3K7-dependent, but not MAP3K3-dependent, NF-kappa-B activation. Can activate the MAP (mitogen activated protein) kinase pathway leading to activation of ELK1. In Homo sapiens (Human), this protein is E3 ubiquitin-protein ligase pellino homolog 2 (PELI2).